Consider the following 80-residue polypeptide: Acyl carrier protein (80 aa).

The region spanning 2-77 (KNIEERIKKI…KSIDFIQNKN (76 aa)) is the Carrier domain. An O-(pantetheine 4'-phosphoryl)serine modification is found at S37.

The protein belongs to the acyl carrier protein (ACP) family. In terms of processing, 4'-phosphopantetheine is transferred from CoA to a specific serine of apo-ACP by AcpS. This modification is essential for activity because fatty acids are bound in thioester linkage to the sulfhydryl of the prosthetic group.

Its subcellular location is the cytoplasm. It functions in the pathway lipid metabolism; fatty acid biosynthesis. In terms of biological role, carrier of the growing fatty acid chain in fatty acid biosynthesis. The polypeptide is Acyl carrier protein (Buchnera aphidicola subsp. Acyrthosiphon pisum (strain 5A)).